The primary structure comprises 405 residues: Tryptophan synthase beta chain (405 aa).

Position 96 is an N6-(pyridoxal phosphate)lysine (K96).

It belongs to the TrpB family. In terms of assembly, tetramer of two alpha and two beta chains. The cofactor is pyridoxal 5'-phosphate.

The enzyme catalyses (1S,2R)-1-C-(indol-3-yl)glycerol 3-phosphate + L-serine = D-glyceraldehyde 3-phosphate + L-tryptophan + H2O. The protein operates within amino-acid biosynthesis; L-tryptophan biosynthesis; L-tryptophan from chorismate: step 5/5. Functionally, the beta subunit is responsible for the synthesis of L-tryptophan from indole and L-serine. This is Tryptophan synthase beta chain from Clostridium botulinum (strain Alaska E43 / Type E3).